The following is a 780-amino-acid chain: Calpain clp-1 (780 aa).

Residues 269–282 (DVDPFVRPGPDPDR) show a composition bias toward basic and acidic residues. The disordered stretch occupies residues 269-300 (DVDPFVRPGPDPDRGGGGSGPSPISPRPTTEP). The 296-residue stretch at 316-611 (LFEDPQFLAN…FEKMEICNLG (296 aa)) folds into the Calpain catalytic domain. Residues Cys371, His527, and Asn551 contribute to the active site.

This sequence belongs to the peptidase C2 family. In terms of tissue distribution, expressed in muscle and neuronal tissues. Expressed in the ventral and dorsal nerve cord, intestinal and hypodermal tissues.

The protein resides in the cytoplasm. It is found in the myofibril. It localises to the sarcomere. The protein localises to the m line. Functionally, calcium-regulated non-lysosomal thiol-protease which catalyzes limited proteolysis of substrates. Required for assembly and maintenance of integrin attachment complexes which are essential for maintenance of adult muscle. Proteolytic activity is activated in response to increased intracellular Ca(2+) levels during cell degeneration and promotes necrotic cell death. This chain is Calpain clp-1, found in Caenorhabditis elegans.